The primary structure comprises 353 residues: Uroporphyrinogen decarboxylase (353 aa).

Substrate contacts are provided by residues 27-31 (RQAGR), phenylalanine 46, aspartate 76, tyrosine 152, serine 207, and histidine 321.

Belongs to the uroporphyrinogen decarboxylase family. Homodimer.

The protein resides in the cytoplasm. The catalysed reaction is uroporphyrinogen III + 4 H(+) = coproporphyrinogen III + 4 CO2. It functions in the pathway porphyrin-containing compound metabolism; protoporphyrin-IX biosynthesis; coproporphyrinogen-III from 5-aminolevulinate: step 4/4. In terms of biological role, catalyzes the decarboxylation of four acetate groups of uroporphyrinogen-III to yield coproporphyrinogen-III. In Listeria monocytogenes serotype 4b (strain F2365), this protein is Uroporphyrinogen decarboxylase.